Consider the following 399-residue polypeptide: MPNIFVEELVHTPIEKQVIEIVERKGIGHPDSLADGMAEAMSRELSREYIRRFGAVLHHNTDETQIVAGRSNPQFGGGEVIEPIYVLLVGRATKFFNGEYIPTDKIALKAARDYIRQHMQNLDPELDVVFNVRLGEGSTDLQDVFRRKSGNVALANDTSFGIGFAPLSETERLVFNVERRIYEEFRKKNPAIGEDVKVMGLREKDRISLTIAAAFVDRYVANIKEYDAIKEELENFVKEISSEYTEREVEVFVNTADDYETGCVYLTVTGTSAENGDDGSVGRGNRCNGLITPGRPMSMEASSGKNPINHVGKIYNLLANQIAARIAEEVEGVEEVYVRILSQIGKPINEPKALSVQVIPKSGYDISKLERPARDIAEEMIANVGKITDMVIEGKVRTF.

135 to 140 (GEGSTD) is a binding site for ATP.

This sequence belongs to the AdoMet synthase 2 family. Requires Mg(2+) as cofactor.

The catalysed reaction is L-methionine + ATP + H2O = S-adenosyl-L-methionine + phosphate + diphosphate. The protein operates within amino-acid biosynthesis; S-adenosyl-L-methionine biosynthesis; S-adenosyl-L-methionine from L-methionine: step 1/1. Functionally, catalyzes the formation of S-adenosylmethionine from methionine and ATP. The sequence is that of S-adenosylmethionine synthase (mat) from Archaeoglobus fulgidus (strain ATCC 49558 / DSM 4304 / JCM 9628 / NBRC 100126 / VC-16).